The chain runs to 147 residues: Hemoglobin subunit beta-1 (147 aa).

Valine 2 carries the post-translational modification N-acetylvaline. The Globin domain occupies 3 to 147 (HLTGEEKAAV…VATALAHKYH (145 aa)). Lysine 18 is modified (N6-succinyllysine). At serine 45 the chain carries Phosphoserine. Lysine 60 bears the N6-succinyllysine mark. Heme b contacts are provided by histidine 64 and histidine 93. The residue at position 105 (arginine 105) is an Asymmetric dimethylarginine. At threonine 124 the chain carries Phosphothreonine.

Belongs to the globin family. As to quaternary structure, hb1 is a heterotetramer of two alpha chains and two beta-1 chains. In terms of tissue distribution, red blood cells.

Functionally, involved in oxygen transport from the lung to the various peripheral tissues. The sequence is that of Hemoglobin subunit beta-1 (HBB1) from Chalinolobus morio (Chocolate-wattled bat).